Consider the following 534-residue polypeptide: C-type lectin domain family 18 member A (534 aa).

The disordered stretch occupies residues 47-88 (GALPVAGKPEPMARSLASAPVSPWHHMDRGSTTPAKARSHSA). The SCP domain maps to 139 to 270 (LTAHNRLRSR…EAMEAFVCAY (132 aa)). Residues 316–349 (PRNPCRMSCRNLGHLNISTCRCHCQPGYTGRYCQ) form the EGF-like domain. 4 cysteine pairs are disulfide-bonded: Cys324-Cys337, Cys339-Cys348, Cys415-Cys520, and Cys496-Cys512. Positions 394 to 521 (IDGDCFMVSP…CKTRNRYICQ (128 aa)) constitute a C-type lectin domain.

It localises to the secreted. The sequence is that of C-type lectin domain family 18 member A (Clec18a) from Mus musculus (Mouse).